Reading from the N-terminus, the 233-residue chain is Membrane glycoprotein UL9 (233 aa).

Positions 1 to 20 are cleaved as a signal peptide; that stretch reads MSKRLQVFPWITILFYTSKS. N-linked (GlcNAc...) asparagine; by host glycans are attached at residues Asn-40, Asn-94, Asn-101, Asn-131, and Asn-169. Residues 194–214 form a helical membrane-spanning segment; sequence MWIIPLVIVITIIVLICFKFP.

Belongs to the HHV-5 UL9 family.

It localises to the host membrane. In Homo sapiens (Human), this protein is Membrane glycoprotein UL9 (UL9).